The following is a 109-amino-acid chain: Fluoride-specific ion channel FluC (109 aa).

Helical transmembrane passes span 21 to 41, 52 to 72, and 83 to 103; these read FFLNNNLLVGVIGSFVYGFVI, ILLTGFCSCFTSFSGFVLFLY, and LFFYLNIIIVLNLIIMYAGFL.

This sequence belongs to the fluoride channel Fluc/FEX (TC 1.A.43) family.

The protein localises to the cell inner membrane. The catalysed reaction is fluoride(in) = fluoride(out). Fluoride-specific ion channel. Important for reducing fluoride concentration in the cell, thus reducing its toxicity. This chain is Fluoride-specific ion channel FluC, found in Prochlorococcus marinus (strain MIT 9515).